Reading from the N-terminus, the 225-residue chain is Late embryogenesis abundant protein 29 (225 aa).

Disordered stretches follow at residues Met1–Leu167 and Thr193–Lys225. Composition is skewed to basic and acidic residues over residues Met28–Thr39, Lys49–Thr61, Lys71–Thr83, and Lys93–Ala119. LEA 11-mer repeat repeat units lie at residues Thr53–Gln63, Thr75–Gln85, and Thr97–Gln107. The span at Thr141–Lys153 shows a compositional bias: polar residues. Residues Glu154–Thr163 show a composition bias toward basic and acidic residues. Low complexity predominate over residues Thr205 to Lys225.

The protein belongs to the LEA type 4 family.

It is found in the cytoplasm. Its subcellular location is the cytosol. Its function is as follows. Involved dehydration tolerance. In Arabidopsis thaliana (Mouse-ear cress), this protein is Late embryogenesis abundant protein 29.